Here is a 974-residue protein sequence, read N- to C-terminus: Mediator of RNA polymerase II transcription subunit 16 (974 aa).

The tract at residues 62-92 (ESSSTLSTHSTTTSVNGSTTAGVGSTPNFGG) is disordered. The span at 63–75 (SSSTLSTHSTTTS) shows a compositional bias: low complexity. Positions 76-92 (VNGSTTAGVGSTPNFGG) are enriched in polar residues. The Nuclear localization signal signature appears at 889 to 893 (KLPIK).

This sequence belongs to the Mediator complex subunit 16 family. In terms of assembly, component of the Mediator complex, which is composed of at least 21 subunits that form three structurally distinct submodules. The Mediator head module contains MED6, MED8, MED11, SRB4/MED17, SRB5/MED18, ROX3/MED19, SRB2/MED20 and SRB6/MED22, the middle module contains MED1, MED4, NUT1/MED5, MED7, CSE2/MED9, NUT2/MED10, SRB7/MED21 and SOH1/MED31, and the tail module contains MED2, PGD1/MED3, RGR1/MED14, GAL11/MED15 and SIN4/MED16. The head and the middle modules interact directly with RNA polymerase II, whereas the elongated tail module interacts with gene-specific regulatory proteins. Interacts with HOG1. Post-translationally, phosphorylated by KIN28.

It is found in the nucleus. Its function is as follows. Component of the Mediator complex, a coactivator involved in the regulated transcription of nearly all RNA polymerase II-dependent genes. Mediator functions as a bridge to convey information from gene-specific regulatory proteins to the basal RNA polymerase II transcription machinery. The Mediator complex, having a compact conformation in its free form, is recruited to promoters by direct interactions with regulatory proteins and serves for the assembly of a functional preinitiation complex with RNA polymerase II and the general transcription factors. The Mediator complex unfolds to an extended conformation and partially surrounds RNA polymerase II, specifically interacting with the unphosphorylated form of the C-terminal domain (CTD) of RNA polymerase II. The Mediator complex dissociates from the RNA polymerase II holoenzyme and stays at the promoter when transcriptional elongation begins. The protein is Mediator of RNA polymerase II transcription subunit 16 (SIN4) of Saccharomyces cerevisiae (strain ATCC 204508 / S288c) (Baker's yeast).